The following is an 87-amino-acid chain: uncharacterized protein (87 aa).

An N-terminal signal peptide occupies residues 1 to 25 (MKIRKILLSSALSFGMLISAVPALA).

This is an uncharacterized protein from Bacillus subtilis (strain 168).